The primary structure comprises 465 residues: Glucose-1-phosphate adenylyltransferase (465 aa).

Residues glycine 164, 181-182 (EK), and serine 199 each bind alpha-D-glucose 1-phosphate.

This sequence belongs to the bacterial/plant glucose-1-phosphate adenylyltransferase family. As to quaternary structure, homotetramer.

It catalyses the reaction alpha-D-glucose 1-phosphate + ATP + H(+) = ADP-alpha-D-glucose + diphosphate. It functions in the pathway glycan biosynthesis; glycogen biosynthesis. Involved in the biosynthesis of ADP-glucose, a building block required for the elongation reactions to produce glycogen. Catalyzes the reaction between ATP and alpha-D-glucose 1-phosphate (G1P) to produce pyrophosphate and ADP-Glc. This is Glucose-1-phosphate adenylyltransferase from Arthrobacter sp. (strain FB24).